Reading from the N-terminus, the 209-residue chain is Large ribosomal subunit protein uL3 (209 aa).

Positions Arg125–Pro148 are disordered.

This sequence belongs to the universal ribosomal protein uL3 family. Part of the 50S ribosomal subunit. Forms a cluster with proteins L14 and L19.

One of the primary rRNA binding proteins, it binds directly near the 3'-end of the 23S rRNA, where it nucleates assembly of the 50S subunit. The protein is Large ribosomal subunit protein uL3 of Lysinibacillus sphaericus (strain C3-41).